A 282-amino-acid polypeptide reads, in one-letter code: MFQTTPKQVKPTTVPKTGRKNADVAHEHFTNGTQKLEEALLKFEAILKPKEKDQSIQEFRKQVRAVCKDAKDAKKFLEKYKNIRYRPKRTRESHNTGLEKPRMISEAMATFADWEYGKTEKSRYDVTKYLCAYIKDNDLRDASNKTIILPDAKLKKLLQVDDSVVLKYPTMQKYLKHCFDEVVARAPSPTTELGAAELTDDQTTAEEAPKEVKKSRKPKEVAVPQPPPEEEEVAPVEQQQQSVESEEEELQLPPPKPKKSTGKKDKENIPLEKVKKEHKIKK.

Low complexity predominate over residues 1–16 (MFQTTPKQVKPTTVPK). Residues 1 to 21 (MFQTTPKQVKPTTVPKTGRKN) form a disordered region. Positions 97-181 (GLEKPRMISE…QKYLKHCFDE (85 aa)) constitute an SWIB/MDM2 domain. Positions 199 to 282 (TDDQTTAEEA…KVKKEHKIKK (84 aa)) are disordered. Residues 262–275 (GKKDKENIPLEKVK) are compositionally biased toward basic and acidic residues.

It belongs to the IIV-6 306R family.

The protein is Putative SWIB domain-containing protein 070L of Invertebrate iridescent virus 3 (IIV-3).